The chain runs to 211 residues: Chaperone protein TorD (211 aa).

It belongs to the TorD/DmsD family. TorD subfamily.

It is found in the cytoplasm. Involved in the biogenesis of TorA. Acts on TorA before the insertion of the molybdenum cofactor and, as a result, probably favors a conformation of the apoenzyme that is competent for acquiring the cofactor. This is Chaperone protein TorD from Shewanella loihica (strain ATCC BAA-1088 / PV-4).